The chain runs to 216 residues: Imidazole glycerol phosphate synthase subunit HisH (216 aa).

The Glutamine amidotransferase type-1 domain occupies 2 to 216 (RVAIIDYGSG…LITNFLRWRP (215 aa)). The active-site Nucleophile is Cys-88. Catalysis depends on residues His-196 and Glu-198.

In terms of assembly, heterodimer of HisH and HisF.

Its subcellular location is the cytoplasm. It carries out the reaction 5-[(5-phospho-1-deoxy-D-ribulos-1-ylimino)methylamino]-1-(5-phospho-beta-D-ribosyl)imidazole-4-carboxamide + L-glutamine = D-erythro-1-(imidazol-4-yl)glycerol 3-phosphate + 5-amino-1-(5-phospho-beta-D-ribosyl)imidazole-4-carboxamide + L-glutamate + H(+). The catalysed reaction is L-glutamine + H2O = L-glutamate + NH4(+). It participates in amino-acid biosynthesis; L-histidine biosynthesis; L-histidine from 5-phospho-alpha-D-ribose 1-diphosphate: step 5/9. Its function is as follows. IGPS catalyzes the conversion of PRFAR and glutamine to IGP, AICAR and glutamate. The HisH subunit catalyzes the hydrolysis of glutamine to glutamate and ammonia as part of the synthesis of IGP and AICAR. The resulting ammonia molecule is channeled to the active site of HisF. The protein is Imidazole glycerol phosphate synthase subunit HisH of Mesorhizobium japonicum (strain LMG 29417 / CECT 9101 / MAFF 303099) (Mesorhizobium loti (strain MAFF 303099)).